A 69-amino-acid chain; its full sequence is Large ribosomal subunit protein bL31 (69 aa).

The Zn(2+) site is built by Cys17, Cys19, Cys37, and Cys40.

It belongs to the bacterial ribosomal protein bL31 family. Type A subfamily. Part of the 50S ribosomal subunit. The cofactor is Zn(2+).

Functionally, binds the 23S rRNA. The chain is Large ribosomal subunit protein bL31 from Clostridium novyi (strain NT).